A 233-amino-acid polypeptide reads, in one-letter code: Putative N-acetylmannosamine-6-phosphate 2-epimerase (233 aa).

Belongs to the NanE family.

It carries out the reaction an N-acyl-D-glucosamine 6-phosphate = an N-acyl-D-mannosamine 6-phosphate. The protein operates within amino-sugar metabolism; N-acetylneuraminate degradation; D-fructose 6-phosphate from N-acetylneuraminate: step 3/5. Converts N-acetylmannosamine-6-phosphate (ManNAc-6-P) to N-acetylglucosamine-6-phosphate (GlcNAc-6-P). The sequence is that of Putative N-acetylmannosamine-6-phosphate 2-epimerase from Yersinia pseudotuberculosis serotype O:3 (strain YPIII).